The primary structure comprises 236 residues: tRNA (guanine-N(1)-)-methyltransferase (236 aa).

Residues Gly-110 and 129-134 (LGDFVL) each bind S-adenosyl-L-methionine.

Belongs to the RNA methyltransferase TrmD family. As to quaternary structure, homodimer.

The protein localises to the cytoplasm. It carries out the reaction guanosine(37) in tRNA + S-adenosyl-L-methionine = N(1)-methylguanosine(37) in tRNA + S-adenosyl-L-homocysteine + H(+). Its function is as follows. Specifically methylates guanosine-37 in various tRNAs. The protein is tRNA (guanine-N(1)-)-methyltransferase of Clostridium perfringens (strain SM101 / Type A).